The primary structure comprises 372 residues: MGWSCLVTGAGGLLGQRIVRLLVEEKELKEIRALDKAFRPELREEFSKLQNRTKLTVLEGDILDEPFLKRACQDVSVVIHTACIIDVFGVTHRESIMNVNVKGTQLLLEACVQASVPVFIYTSSIEVAGPNSYKEIIQNGHEEEPLENTWPTPYPYSKKLAEKAVLAANGWNLKNGDTLYTCALRPTYIYGEGGPFLSASINEALNNNGILSSVGKFSTVNPVYVGNVAWAHILALRALRDPKKAPSVRGQFYYISDDTPHQSYDNLNYILSKEFGLRLDSRWSLPLTLMYWIGFLLEVVSFLLSPIYSYQPPFNRHTVTLSNSVFTFSYKKAQRDLAYKPLYSWEEAKQKTVEWVGSLVDRHKETLKSKTQ.

Tyr154 serves as the catalytic Proton acceptor. Lys158 is a binding site for NAD(+). The chain crosses the membrane as a helical span at residues 287 to 307; it reads LTLMYWIGFLLEVVSFLLSPI.

The protein belongs to the 3-beta-HSD family. In terms of tissue distribution, expressed in adrenal gland, testis and ovary.

The protein localises to the endoplasmic reticulum membrane. It localises to the mitochondrion membrane. The catalysed reaction is a 3beta-hydroxy-Delta(5)-steroid + NAD(+) = a 3-oxo-Delta(5)-steroid + NADH + H(+). It catalyses the reaction a 3-oxo-Delta(5)-steroid = a 3-oxo-Delta(4)-steroid. The enzyme catalyses pregnenolone + NAD(+) = pregn-5-ene-3,20-dione + NADH + H(+). It carries out the reaction pregn-5-ene-3,20-dione = progesterone. The catalysed reaction is 3beta-hydroxyandrost-5-en-17-one + NAD(+) = androst-5-ene-3,17-dione + NADH + H(+). It catalyses the reaction androst-5-ene-3,17-dione = androst-4-ene-3,17-dione. It functions in the pathway lipid metabolism; steroid biosynthesis. Its function is as follows. 3-beta-HSD is a bifunctional enzyme, that catalyzes the oxidative conversion of Delta(5)-ene-3-beta-hydroxy steroid, and the oxidative conversion of ketosteroids. The 3-beta-HSD enzymatic system plays a crucial role in the biosynthesis of all classes of hormonal steroids. This is 3 beta-hydroxysteroid dehydrogenase/Delta 5--&gt;4-isomerase type 2 from Homo sapiens (Human).